Consider the following 397-residue polypeptide: MYQSLALAASPRQAAYADSGSFLHAPGAGSPMFVPPARVPSMLSYLSGCEPSPQPPELAARPGWAQTATADSSAFGPGSPHPPAAHPPGATAFPFAHSPSGPGSGGSAGGRDGSAYQGALLPREQFAAPLGRPVGTSYSATYPAYVSPDVAQSWTAGPFDGSVLHGLPGRRPTFVSDFLEEFPGEGRECVNCGALSTPLWRRDGTGHYLCNACGLYHKMNGVNRPLVRPQKRLSSSRRAGLCCTNCHTTNTTLWRRNSEGEPVCNACGLYMKLHGVPRPLAMKKESIQTRKRKPKTIAKARGSSGSTRNASASPSAVASTDSSAATSKAKPSLASPVCPGPSMAPQASGQEDDSLAPGHLEFKFEPEDFAFPSTAPSPQAGLRGALRQEAWCALALA.

The segment at 48–116 (GCEPSPQPPE…SAGGRDGSAY (69 aa)) is disordered. Positions 87–101 (PPGATAFPFAHSPSG) are enriched in low complexity. The segment covering 102–112 (PGSGGSAGGRD) has biased composition (gly residues). 2 GATA-type zinc fingers span residues 189–213 (CVNCGALSTPLWRRDGTGHYLCNAC) and 243–267 (CTNCHTTNTTLWRRNSEGEPVCNAC). Residues 281–356 (AMKKESIQTR…ASGQEDDSLA (76 aa)) are disordered. A compositionally biased stretch (basic residues) spans 289–298 (TRKRKPKTIA). Residues 310–335 (ASASPSAVASTDSSAATSKAKPSLAS) are compositionally biased toward low complexity.

Its subcellular location is the nucleus. Transcription factor required during cardiovascular development. Plays an important role in the transcriptional program(s) that underlies smooth muscle cell diversity. Binds to the functionally important CEF-1 nuclear protein binding site in the cardiac-specific slow/cardiac troponin C transcriptional enhancer. This is Transcription factor GATA-5 from Homo sapiens (Human).